Here is a 587-residue protein sequence, read N- to C-terminus: Bifunctional lycopene cyclase/phytoene synthase (587 aa).

Residues 1–242 (MGYDYALVHV…IVFGIAAFDK (242 aa)) are lycopene beta-cyclase. The next 7 membrane-spanning stretches (helical) occupy residues 8–28 (VHVK…YPVF), 35–55 (RTLF…SYLI), 77–97 (AEEL…YIIL), 120–140 (GKLV…WLIA), 150–170 (LILV…AHFL), 172–192 (ALPL…LWIV), and 220–240 (IEEA…IAAF). The phytoene synthase stretch occupies residues 249-587 (AFPEKFDKPA…WVAWSTLMAA (339 aa)).

The protein in the N-terminal section; belongs to the lycopene beta-cyclase family. In the C-terminal section; belongs to the phytoene/squalene synthase family.

It localises to the membrane. The enzyme catalyses all-trans-lycopene = gamma-carotene. It carries out the reaction gamma-carotene = all-trans-beta-carotene. It catalyses the reaction 2 (2E,6E,10E)-geranylgeranyl diphosphate = 15-cis-phytoene + 2 diphosphate. Its pathway is carotenoid biosynthesis; beta-carotene biosynthesis. It functions in the pathway carotenoid biosynthesis; phytoene biosynthesis; all-trans-phytoene from geranylgeranyl diphosphate: step 1/1. Its function is as follows. Bifunctional enzyme that catalyzes the reactions from geranylgeranyl diphosphate to phytoene (phytoene synthase) and lycopene to beta-carotene via the intermediate gamma-carotene (lycopene cyclase). This is Bifunctional lycopene cyclase/phytoene synthase from Colletotrichum graminicola (strain M1.001 / M2 / FGSC 10212) (Maize anthracnose fungus).